The primary structure comprises 145 residues: uncharacterized protein (145 aa).

A coiled-coil region spans residues 1–41 (MEQHYHQQNQLRQLKQQQLKELLQQQSKDKEEDEQKHDDYR). A disordered region spans residues 1-91 (MEQHYHQQNQ…LQISEPEGES (91 aa)). A compositionally biased stretch (low complexity) spans 7-26 (QQNQLRQLKQQQLKELLQQQ). Residues 27–42 (SKDKEEDEQKHDDYRS) are compositionally biased toward basic and acidic residues. The span at 43–58 (PTKTTTTTATSTSAAT) shows a compositional bias: low complexity.

This is an uncharacterized protein from Dictyostelium discoideum (Social amoeba).